Reading from the N-terminus, the 335-residue chain is DNA-directed RNA polymerase subunit alpha (335 aa).

An alpha N-terminal domain (alpha-NTD) region spans residues 1–233 (MVREKITVST…DLFIPFLHME (233 aa)). The alpha C-terminal domain (alpha-CTD) stretch occupies residues 265 to 335 (KEIALKSIFI…KQLVIFLPKK (71 aa)).

Belongs to the RNA polymerase alpha chain family. As to quaternary structure, in plastids the minimal PEP RNA polymerase catalytic core is composed of four subunits: alpha, beta, beta', and beta''. When a (nuclear-encoded) sigma factor is associated with the core the holoenzyme is formed, which can initiate transcription.

The protein resides in the plastid. Its subcellular location is the chloroplast. The catalysed reaction is RNA(n) + a ribonucleoside 5'-triphosphate = RNA(n+1) + diphosphate. Its function is as follows. DNA-dependent RNA polymerase catalyzes the transcription of DNA into RNA using the four ribonucleoside triphosphates as substrates. This is DNA-directed RNA polymerase subunit alpha from Coffea arabica (Arabian coffee).